The primary structure comprises 66 residues: Large ribosomal subunit protein bL31 (66 aa).

Zn(2+) is bound by residues Cys16, Cys18, Cys36, and Cys39.

This sequence belongs to the bacterial ribosomal protein bL31 family. Type A subfamily. As to quaternary structure, part of the 50S ribosomal subunit. It depends on Zn(2+) as a cofactor.

In terms of biological role, binds the 23S rRNA. This Geobacter metallireducens (strain ATCC 53774 / DSM 7210 / GS-15) protein is Large ribosomal subunit protein bL31.